A 264-amino-acid polypeptide reads, in one-letter code: Merozoite surface protein 2 (264 aa).

The first 20 residues, 1 to 20 (MKVIKTLSIINFFIFVTFNI), serve as a signal peptide directing secretion. N-linked (GlcNAc...) asparagine glycans are attached at residues asparagine 22 and asparagine 36. The segment at 44 to 190 (ANEGSNTNSV…PQTAENENPA (147 aa)) is polymorphic region. A disordered region spans residues 46–227 (EGSNTNSVGA…QKECTDGNKE (182 aa)). Repeat copies occupy residues 60 to 91 (ADTI…TPTA) and 92 to 123 (ADTI…TPTA). Residues 60 to 123 (ADTIASGSQR…GESQTTTPTA (64 aa)) are 2 X 32 AA perfects repeats. Residues 70-81 (STNSASTSTTNN) show a composition bias toward low complexity. A compositionally biased stretch (polar residues) spans 82–101 (GESQTTTPTAADTIASGSQR). Over residues 102–145 (STNSASTSTTNNGESQTTTPTAADTPTATESISPSPPITTTESS) the composition is skewed to low complexity. Positions 154–166 (TDGKGEESEKQNE) are enriched in basic and acidic residues. An N-linked (GlcNAc...) asparagine glycan is attached at asparagine 213. Residues 217–226 (SQKECTDGNK) show a composition bias toward basic and acidic residues. Cysteines 221 and 229 form a disulfide. Asparagine 238 carries an N-linked (GlcNAc...) asparagine glycan. A lipid anchor (GPI-anchor amidated asparagine) is attached at asparagine 238. The propeptide at 239 to 264 (SSNIASINKFVVLISATLVLSFAIFI) is removed in mature form.

Its subcellular location is the cell membrane. Its function is as follows. May play a role in the merozoite attachment to the erythrocyte. The chain is Merozoite surface protein 2 from Plasmodium falciparum (isolate FC27 / Papua New Guinea).